The primary structure comprises 614 residues: Vitamin B12 transporter BtuB (614 aa).

The N-terminal stretch at 1-20 is a signal peptide; the sequence is MIKKASLLTACSVTAFSAWA. Residues 26 to 33 carry the TonB box motif; sequence DTLVVTAN. In terms of domain architecture, TBDR plug spans 38–152; sequence PRSTVLAPTT…IGGVVNIITT (115 aa). Residues L83, S85, N92, and 110 to 111 contribute to the cyanocob(III)alamin site; that span reads VS. Positions 155-614 constitute a TBDR beta-barrel domain; sequence EPGTEISAGW…EYTLSGSYTF (460 aa). The next 3 beta stranded transmembrane spans lie at 158 to 165, 169 to 178, and 184 to 195; these read TEISAGWG, YQNYDVSTQQ, and TRVTLLGDYAHT. Residues D199, Q211, D213, and D215 each contribute to the Ca(2+) site. The next 2 beta stranded transmembrane spans lie at 217–227 and 232–248; these read FLSKTLYGALE and DAWSGFVRGYGYDNRTN. Positions 249 and 250 each coordinate Ca(2+). Residue A251 coordinates cyanocob(III)alamin. D261 contributes to the Ca(2+) binding site. The next 14 beta stranded transmembrane spans lie at 263–277, 279–296, 309–325, 328–337, 353–369, 371–381, 385–400, 403–417, 434–443, 449–458, 473–490, 494–509, 517–529, and 535–550; these read RKLYSQSWDAGLRYN, ELIKSQLITSYSHSKDYN, TLDEMKQYTVQWANNVI, HGSIGAGVDW, YDQRNTGIYLTGLQQVG, FTFEGAARSDD, FGRHGTWQTSAGWEFI, YRFIASYGTSYKAPN, KSKQWEGAFE, VNWRISGYRN, YYNEGKARIKGVEATANF, PLTHTVSYDYVDARNA, RRAKQQVKYQLDW, and DWGITYQYLGTRYDKD. Position 309 (T309) interacts with cyanocob(III)alamin. R517 contacts cyanocob(III)alamin. Residue Y551 participates in cyanocob(III)alamin binding. 3 beta stranded membrane-spanning segments follow: residues 558-572, 585-596, and 602-614; these read TVKMGGVSLWDLAVA, IANLFDKDYETV, and AGREYTLSGSYTF. The short motif at 597–614 is the TonB C-terminal box element; the sequence is YGYQTAGREYTLSGSYTF.

This sequence belongs to the TonB-dependent receptor family. BtuB (TC 1.B.14.3.1) subfamily.

It localises to the cell outer membrane. In terms of biological role, involved in the active translocation of vitamin B12 (cyanocobalamin) across the outer membrane to the periplasmic space. It derives its energy for transport by interacting with the trans-periplasmic membrane protein TonB. This chain is Vitamin B12 transporter BtuB, found in Escherichia coli O9:H4 (strain HS).